A 520-amino-acid polypeptide reads, in one-letter code: 2-isopropylmalate synthase (520 aa).

Residues 12–274 (VIIFDTTLRD…WNKIDTTQLT (263 aa)) form the Pyruvate carboxyltransferase domain. Positions 21, 209, 211, and 245 each coordinate Mn(2+). The segment at 398–520 (KLTSLTVIAG…RDTVTTAAAS (123 aa)) is regulatory domain.

The protein belongs to the alpha-IPM synthase/homocitrate synthase family. LeuA type 1 subfamily. As to quaternary structure, homodimer. The cofactor is Mn(2+).

The protein resides in the cytoplasm. The enzyme catalyses 3-methyl-2-oxobutanoate + acetyl-CoA + H2O = (2S)-2-isopropylmalate + CoA + H(+). It functions in the pathway amino-acid biosynthesis; L-leucine biosynthesis; L-leucine from 3-methyl-2-oxobutanoate: step 1/4. In terms of biological role, catalyzes the condensation of the acetyl group of acetyl-CoA with 3-methyl-2-oxobutanoate (2-ketoisovalerate) to form 3-carboxy-3-hydroxy-4-methylpentanoate (2-isopropylmalate). The protein is 2-isopropylmalate synthase of Bradyrhizobium diazoefficiens (strain JCM 10833 / BCRC 13528 / IAM 13628 / NBRC 14792 / USDA 110).